We begin with the raw amino-acid sequence, 85 residues long: Photosystem I reaction center subunit PsaK (85 aa).

2 consecutive transmembrane segments (helical) span residues 13 to 33 (VSWT…AIAI) and 59 to 79 (GAML…ILGL).

This sequence belongs to the PsaG/PsaK family.

Its subcellular location is the cellular thylakoid membrane. This is Photosystem I reaction center subunit PsaK from Synechococcus sp. (strain WH7803).